A 119-amino-acid chain; its full sequence is Large ribosomal subunit protein uL24 (119 aa).

This sequence belongs to the universal ribosomal protein uL24 family. In terms of assembly, part of the 50S ribosomal subunit.

In terms of biological role, one of two assembly initiator proteins, it binds directly to the 5'-end of the 23S rRNA, where it nucleates assembly of the 50S subunit. Its function is as follows. Located at the polypeptide exit tunnel on the outside of the subunit. This chain is Large ribosomal subunit protein uL24, found in Methanococcus maripaludis (strain DSM 14266 / JCM 13030 / NBRC 101832 / S2 / LL).